The sequence spans 610 residues: Probable galacturonosyltransferase 5 (610 aa).

Residues methionine 1–arginine 6 are Cytoplasmic-facing. The chain crosses the membrane as a helical; Signal-anchor for type II membrane protein span at residues tryptophan 7–valine 27. Residues serine 28–aspartate 610 are Lumenal-facing. A compositionally biased stretch (polar residues) spans leucine 86 to glutamate 101. Residues leucine 86–alanine 170 are disordered. N-linked (GlcNAc...) asparagine glycans are attached at residues asparagine 88 and asparagine 94. The segment covering glutamate 110–glutamine 123 has biased composition (basic and acidic residues). A compositionally biased stretch (polar residues) spans alanine 124–alanine 135. Over residues isoleucine 139–alanine 170 the composition is skewed to basic and acidic residues. Residues asparagine 196, asparagine 338, asparagine 401, and asparagine 475 are each glycosylated (N-linked (GlcNAc...) asparagine).

Belongs to the glycosyltransferase 8 family. As to expression, expressed in roots, inflorescences, siliques, leaves and stems.

The protein localises to the golgi apparatus membrane. Its pathway is glycan metabolism; pectin biosynthesis. Functionally, may be involved in pectin and/or xylans biosynthesis in cell walls. The chain is Probable galacturonosyltransferase 5 (GAUT5) from Arabidopsis thaliana (Mouse-ear cress).